A 96-amino-acid polypeptide reads, in one-letter code: MNIRPLHDRVIVKRLEVESTSAGGIVLTGSAAEKSTRGEVLAVGNGRILENGTVRPLDVKVGDVVIFNEGYGVKKEKIDGQEVLILSEADLMAIVG.

Belongs to the GroES chaperonin family. As to quaternary structure, heptamer of 7 subunits arranged in a ring. Interacts with the chaperonin GroEL.

The protein resides in the cytoplasm. Together with the chaperonin GroEL, plays an essential role in assisting protein folding. The GroEL-GroES system forms a nano-cage that allows encapsulation of the non-native substrate proteins and provides a physical environment optimized to promote and accelerate protein folding. GroES binds to the apical surface of the GroEL ring, thereby capping the opening of the GroEL channel. The protein is Co-chaperonin GroES of Shewanella oneidensis (strain ATCC 700550 / JCM 31522 / CIP 106686 / LMG 19005 / NCIMB 14063 / MR-1).